Here is a 1188-residue protein sequence, read N- to C-terminus: DNA-directed RNA polymerase subunit beta (1188 aa).

The protein belongs to the RNA polymerase beta chain family. As to quaternary structure, the RNAP catalytic core consists of 2 alpha, 1 beta, 1 beta' and 1 omega subunit. When a sigma factor is associated with the core the holoenzyme is formed, which can initiate transcription.

It carries out the reaction RNA(n) + a ribonucleoside 5'-triphosphate = RNA(n+1) + diphosphate. Functionally, DNA-dependent RNA polymerase catalyzes the transcription of DNA into RNA using the four ribonucleoside triphosphates as substrates. In Streptococcus sanguinis (strain SK36), this protein is DNA-directed RNA polymerase subunit beta.